The sequence spans 581 residues: 2-succinyl-5-enolpyruvyl-6-hydroxy-3-cyclohexene-1-carboxylate synthase (581 aa).

It belongs to the TPP enzyme family. MenD subfamily. In terms of assembly, homodimer. The cofactor is Mg(2+). It depends on Mn(2+) as a cofactor. Requires thiamine diphosphate as cofactor.

The catalysed reaction is isochorismate + 2-oxoglutarate + H(+) = 5-enolpyruvoyl-6-hydroxy-2-succinyl-cyclohex-3-ene-1-carboxylate + CO2. It functions in the pathway quinol/quinone metabolism; 1,4-dihydroxy-2-naphthoate biosynthesis; 1,4-dihydroxy-2-naphthoate from chorismate: step 2/7. Its pathway is quinol/quinone metabolism; menaquinone biosynthesis. Its function is as follows. Catalyzes the thiamine diphosphate-dependent decarboxylation of 2-oxoglutarate and the subsequent addition of the resulting succinic semialdehyde-thiamine pyrophosphate anion to isochorismate to yield 2-succinyl-5-enolpyruvyl-6-hydroxy-3-cyclohexene-1-carboxylate (SEPHCHC). This is 2-succinyl-5-enolpyruvyl-6-hydroxy-3-cyclohexene-1-carboxylate synthase from Psychromonas ingrahamii (strain DSM 17664 / CCUG 51855 / 37).